Consider the following 213-residue polypeptide: Uracil phosphoribosyltransferase (213 aa).

Residues Arg-78, Arg-103, and 131 to 139 (DPMLATGGT) contribute to the 5-phospho-alpha-D-ribose 1-diphosphate site. Residues Ile-197 and 202 to 204 (GDA) contribute to the uracil site. Asp-203 lines the 5-phospho-alpha-D-ribose 1-diphosphate pocket.

It belongs to the UPRTase family. The cofactor is Mg(2+).

The catalysed reaction is UMP + diphosphate = 5-phospho-alpha-D-ribose 1-diphosphate + uracil. It participates in pyrimidine metabolism; UMP biosynthesis via salvage pathway; UMP from uracil: step 1/1. Its activity is regulated as follows. Allosterically activated by GTP. In terms of biological role, catalyzes the conversion of uracil and 5-phospho-alpha-D-ribose 1-diphosphate (PRPP) to UMP and diphosphate. The protein is Uracil phosphoribosyltransferase of Bifidobacterium longum (strain DJO10A).